Here is a 325-residue protein sequence, read N- to C-terminus: Protein ORANGE-GREEN, chloroplastic (325 aa).

Residues 1–54 constitute a chloroplast transit peptide; that stretch reads MDRVLVASYPINHLIRPHSFRIDYCWSTCFTSRLNSGKERQKLSSRWRWRSMAS. Over residues 53–71 the composition is skewed to low complexity; sequence ASDSTDSSSSSSFAPSVES. A disordered region spans residues 53–77; that stretch reads ASDSTDSSSSSSFAPSVESDPSDKT. A run of 2 helical transmembrane segments spans residues 164–184 and 217–237; these read LYYVTCYSLIAGIILFGGLLA and IVASFSGGAVGVISALMVVEV. The interval 226–317 is CR-type-like; sequence VGVISALMVV…CTGMAMASEH (92 aa). A CXXCXGXG motif repeat occupies 248–255; that stretch reads CKYCLGTG. A CXXCXXXG motif repeat occupies 259 to 266; sequence CARCSNTG. The stretch at 292 to 299 is one CXXCXGXG motif repeat; sequence CQNCSGSG. Residues 303–310 form a CXXCXXXG motif repeat; it reads CPTCLCTG.

This sequence belongs to the orange-like family.

Its subcellular location is the plastid. It is found in the chloroplast membrane. Its function is as follows. Involved in chloroplast differentiation in fruit flesh. This is Protein ORANGE-GREEN, chloroplastic from Cucumis melo (Muskmelon).